A 299-amino-acid chain; its full sequence is Zinc finger protein 414 (299 aa).

Polar residues-rich tracts occupy residues 1–20 (MEELSGPSSDTLATVESSSN) and 70–80 (SCQTSSTTRGV). The segment at 1–102 (MEELSGPSSD…PPPGKQIPCS (102 aa)) is disordered. 2 C2H2-type zinc fingers span residues 99–123 (IPCSSPGCSLSFPSVRDLAQHLRTH) and 135–159 (FRCSALSCTESFPSMQELVAHGKLH). The segment at 166-190 (FKCENCLLRFRTHRSLFKHLHVCID) adopts a C2H2-type 3; degenerate zinc-finger fold. Disordered stretches follow at residues 193-228 (QNPAPPPPPALDKEPPVPERPPESDPSSSLGLPFPL) and 254-299 (PRLR…GACR). The segment covering 203 to 215 (LDKEPPVPERPPE) has biased composition (basic and acidic residues). Low complexity predominate over residues 217–228 (DPSSSLGLPFPL). A compositionally biased stretch (polar residues) spans 268 to 285 (TSSTAIWKKSQGATSSPR).

Belongs to the krueppel C2H2-type zinc-finger protein family.

Its subcellular location is the nucleus. May be involved in transcriptional regulation. This chain is Zinc finger protein 414 (Znf414), found in Rattus norvegicus (Rat).